Consider the following 307-residue polypeptide: Protoheme IX farnesyltransferase (307 aa).

Transmembrane regions (helical) follow at residues 32–52, 65–85, 108–128, 131–151, 158–178, 186–206, 251–271, and 287–307; these read MGIV…ALHF, FFTI…NNYI, PGFA…FLLL, PMAV…YSLW, LNTV…WAAI, IAWM…LALA, LGIT…VLGF, and FVYS…VTFF.

It belongs to the UbiA prenyltransferase family. Protoheme IX farnesyltransferase subfamily. In terms of assembly, interacts with CtaA.

Its subcellular location is the cell membrane. The enzyme catalyses heme b + (2E,6E)-farnesyl diphosphate + H2O = Fe(II)-heme o + diphosphate. It participates in porphyrin-containing compound metabolism; heme O biosynthesis; heme O from protoheme: step 1/1. In terms of biological role, converts heme B (protoheme IX) to heme O by substitution of the vinyl group on carbon 2 of heme B porphyrin ring with a hydroxyethyl farnesyl side group. This Bacillus anthracis (strain A0248) protein is Protoheme IX farnesyltransferase.